A 145-amino-acid polypeptide reads, in one-letter code: uncharacterized protein (145 aa).

Residues 1–25 (MSENNENDGFNLDPDVKEELEETKS) are disordered. Residues 14-25 (PDVKEELEETKS) show a composition bias toward basic and acidic residues.

This is an uncharacterized protein from His1 virus (isolate Australia/Victoria) (His1V).